The following is a 109-amino-acid chain: Large ribosomal subunit protein uL22 (109 aa).

It belongs to the universal ribosomal protein uL22 family. Part of the 50S ribosomal subunit.

In terms of biological role, this protein binds specifically to 23S rRNA; its binding is stimulated by other ribosomal proteins, e.g. L4, L17, and L20. It is important during the early stages of 50S assembly. It makes multiple contacts with different domains of the 23S rRNA in the assembled 50S subunit and ribosome. The globular domain of the protein is located near the polypeptide exit tunnel on the outside of the subunit, while an extended beta-hairpin is found that lines the wall of the exit tunnel in the center of the 70S ribosome. The protein is Large ribosomal subunit protein uL22 of Thiobacillus denitrificans (strain ATCC 25259 / T1).